A 276-amino-acid chain; its full sequence is NH(3)-dependent NAD(+) synthetase (276 aa).

ATP is bound at residue 46-53; sequence GISGGQDS. D52 contributes to the Mg(2+) binding site. Residue R141 coordinates deamido-NAD(+). Position 161 (T161) interacts with ATP. E166 contacts Mg(2+). Residues K174 and D181 each contribute to the deamido-NAD(+) site. Residues K190 and T212 each contribute to the ATP site. 261-262 lines the deamido-NAD(+) pocket; sequence HK.

This sequence belongs to the NAD synthetase family. Homodimer.

The catalysed reaction is deamido-NAD(+) + NH4(+) + ATP = AMP + diphosphate + NAD(+) + H(+). It participates in cofactor biosynthesis; NAD(+) biosynthesis; NAD(+) from deamido-NAD(+) (ammonia route): step 1/1. Catalyzes the ATP-dependent amidation of deamido-NAD to form NAD. Uses ammonia as a nitrogen source. The polypeptide is NH(3)-dependent NAD(+) synthetase (Limosilactobacillus fermentum (strain NBRC 3956 / LMG 18251) (Lactobacillus fermentum)).